The primary structure comprises 204 residues: Protease (204 aa).

Residues His53, Asp70, and Cys121 contribute to the active site.

The protein belongs to the peptidase C5 family. As to quaternary structure, interacts with protease cofactor pVI-C; this interaction is necessary for protease activation.

Its subcellular location is the virion. The protein resides in the host nucleus. The enzyme catalyses Cleaves proteins of the adenovirus and its host cell at two consensus sites: -Yaa-Xaa-Gly-Gly-|-Xaa- and -Yaa-Xaa-Gly-Xaa-|-Gly- (in which Yaa is Met, Ile or Leu, and Xaa is any amino acid).. Its activity is regulated as follows. Requires DNA and protease cofactor for maximal activation. Inside nascent virions, becomes partially activated by binding to the viral DNA, allowing it to cleave the cofactor that binds to the protease and fully activates it. Actin, like the viral protease cofactor, seems to act as a cofactor in the cleavage of cytokeratin 18 and of actin itself. Functionally, cleaves viral precursor proteins (pTP, pIIIa, pVI, pVII, pVIII, and pX) inside newly assembled particles giving rise to mature virions. Protease complexed to its cofactor slides along the viral DNA to specifically locate and cleave the viral precursors. Mature virions have a weakened organization compared to the unmature virions, thereby facilitating subsequent uncoating. Without maturation, the particle lacks infectivity and is unable to uncoat. Late in adenovirus infection, in the cytoplasm, may participate in the cytoskeleton destruction. Cleaves host cell cytoskeletal keratins K7 and K18. This Porcine adenovirus A serotype 3 (PAdV-3) protein is Protease.